The chain runs to 268 residues: Ribosomal RNA small subunit methyltransferase A (268 aa).

6 residues coordinate S-adenosyl-L-methionine: N16, L18, G43, E64, D89, and N110.

The protein belongs to the class I-like SAM-binding methyltransferase superfamily. rRNA adenine N(6)-methyltransferase family. RsmA subfamily.

The protein resides in the cytoplasm. The catalysed reaction is adenosine(1518)/adenosine(1519) in 16S rRNA + 4 S-adenosyl-L-methionine = N(6)-dimethyladenosine(1518)/N(6)-dimethyladenosine(1519) in 16S rRNA + 4 S-adenosyl-L-homocysteine + 4 H(+). Its function is as follows. Specifically dimethylates two adjacent adenosines (A1518 and A1519) in the loop of a conserved hairpin near the 3'-end of 16S rRNA in the 30S particle. May play a critical role in biogenesis of 30S subunits. This Pseudomonas aeruginosa (strain ATCC 15692 / DSM 22644 / CIP 104116 / JCM 14847 / LMG 12228 / 1C / PRS 101 / PAO1) protein is Ribosomal RNA small subunit methyltransferase A.